The chain runs to 682 residues: MIDRYKHQQLQIGSVSPQQISAWANKILPNGEIVGEVTKPYTFHYKTNKPEKDGLFCERIFGPIKSGICACGNYRVIGAEKEDPKFCEQCGVEFIDSRIRRYQMGYIKLACPVTHVWYLKRLPSYIANLLDKPLKELEGLVYCDFSFARPIAKKPTFLRLRGLFEYEIQSWKYSIPLFFTTQGFDTFRNREISTGAGAIREQLADLDLRIVIDNSSVEWKDLGDEGSTGNEWEDRKIGRRKDFLVRRMELAKHFIRTNVEPERMVLCLLPVLPPELRPIIQIDGGKLMSSDINELYRRVIYRNNTLTDLLKTSRSTPGELVMCQEKLVQEAVDTLLDNGIRGQPMRDGHNKVYKSFSDVIEGKEGRFRETLLGKRVDYSGRSVIVVGPSLSLHRCGLPREIAIELFQTFVIRGLIRQHLASNIGIAKSKIREKEPIVWEILQEVMQGHPVLLNRAPTLHRLGIQAFQPVLVEGRAICLHPLVCKGFNADFDGDQMAVHVPLSLEAQAEARLLMFSHMNLLSPAIGDPISVPTQDMLIGLYVLTMGNRRGIFVNRYNPCNRRNYQNKTVDNNNYKHTKEKKPYFLSSYDALGAYQQKRINLHSPLWLRWRLDQRVIGSREVPIEVQYESLGTYQEIYGHYLIVRSVKKEILCIYIRTTVGHISFYREIEESVQGFCRAYSYGT.

Cysteine 69, cysteine 71, cysteine 87, and cysteine 90 together coordinate Zn(2+). Mg(2+)-binding residues include aspartate 489, aspartate 491, and aspartate 493.

This sequence belongs to the RNA polymerase beta' chain family. RpoC1 subfamily. In terms of assembly, in plastids the minimal PEP RNA polymerase catalytic core is composed of four subunits: alpha, beta, beta', and beta''. When a (nuclear-encoded) sigma factor is associated with the core the holoenzyme is formed, which can initiate transcription. Mg(2+) is required as a cofactor. Requires Zn(2+) as cofactor.

Its subcellular location is the plastid. It localises to the chloroplast. The enzyme catalyses RNA(n) + a ribonucleoside 5'-triphosphate = RNA(n+1) + diphosphate. In terms of biological role, DNA-dependent RNA polymerase catalyzes the transcription of DNA into RNA using the four ribonucleoside triphosphates as substrates. This is DNA-directed RNA polymerase subunit beta' from Acorus calamus var. americanus (American sweet flag).